Here is a 130-residue protein sequence, read N- to C-terminus: Ribosome-binding factor A (130 aa).

The interval 111–130 (RDLDDVGPGATSSDEDAEQR) is disordered.

This sequence belongs to the RbfA family. Monomer. Binds 30S ribosomal subunits, but not 50S ribosomal subunits or 70S ribosomes.

It is found in the cytoplasm. Its function is as follows. One of several proteins that assist in the late maturation steps of the functional core of the 30S ribosomal subunit. Associates with free 30S ribosomal subunits (but not with 30S subunits that are part of 70S ribosomes or polysomes). Required for efficient processing of 16S rRNA. May interact with the 5'-terminal helix region of 16S rRNA. In Xanthomonas oryzae pv. oryzae (strain MAFF 311018), this protein is Ribosome-binding factor A.